A 380-amino-acid polypeptide reads, in one-letter code: 1-deoxy-D-xylulose 5-phosphate reductoisomerase (380 aa).

The NADPH site is built by Thr10, Gly11, Ser12, Ile13, Gly36, Arg37, Asn38, and Asn120. 1-deoxy-D-xylulose 5-phosphate is bound at residue Lys121. Position 122 (Glu122) interacts with NADPH. Asp146 provides a ligand contact to Mn(2+). Residues Ser147, Glu148, Ser172, and His195 each coordinate 1-deoxy-D-xylulose 5-phosphate. Glu148 contacts Mn(2+). Gly201 provides a ligand contact to NADPH. 1-deoxy-D-xylulose 5-phosphate-binding residues include Ser208, Asn213, Lys214, and Glu217. Glu217 lines the Mn(2+) pocket.

The protein belongs to the DXR family. Requires Mg(2+) as cofactor. Mn(2+) is required as a cofactor.

The catalysed reaction is 2-C-methyl-D-erythritol 4-phosphate + NADP(+) = 1-deoxy-D-xylulose 5-phosphate + NADPH + H(+). The protein operates within isoprenoid biosynthesis; isopentenyl diphosphate biosynthesis via DXP pathway; isopentenyl diphosphate from 1-deoxy-D-xylulose 5-phosphate: step 1/6. Functionally, catalyzes the NADPH-dependent rearrangement and reduction of 1-deoxy-D-xylulose-5-phosphate (DXP) to 2-C-methyl-D-erythritol 4-phosphate (MEP). This is 1-deoxy-D-xylulose 5-phosphate reductoisomerase from Listeria innocua serovar 6a (strain ATCC BAA-680 / CLIP 11262).